Consider the following 479-residue polypeptide: F-box/LRR-repeat protein 16 (479 aa).

Positions 1 to 92 (MSSPGIDGDP…GPVSGPPVER (92 aa)) are disordered. The segment covering 47 to 60 (CQPPPPPTLPPPSL) has biased composition (pro residues). Arg-92 is subject to Omega-N-methylarginine. Positions 94-139 (PLATDEKILNGLFWYFSACEKCILAQVCKAWRRVLYQPKFWAGLTP) constitute an F-box domain. LRR repeat units lie at residues 321–342 (NLTS…ELVA), 347–369 (KLRS…YVAC), 373–394 (RLEE…SYLS), 398–419 (SLRS…KHLL), 423–444 (NLRL…SGLV), and 446–470 (LQEL…YFSQ).

In terms of assembly, interacts with SKP1 and CUL1.

In terms of biological role, substrate-recognition component of the SCF (SKP1-CUL1-F-box protein)-type E3 ubiquitin ligase complex. In Mus musculus (Mouse), this protein is F-box/LRR-repeat protein 16 (Fbxl16).